The chain runs to 133 residues: Small ribosomal subunit protein uS8 (133 aa).

It belongs to the universal ribosomal protein uS8 family. As to quaternary structure, part of the 30S ribosomal subunit. Contacts proteins S5 and S12.

One of the primary rRNA binding proteins, it binds directly to 16S rRNA central domain where it helps coordinate assembly of the platform of the 30S subunit. The sequence is that of Small ribosomal subunit protein uS8 from Prochlorococcus marinus (strain AS9601).